We begin with the raw amino-acid sequence, 195 residues long: Imidazoleglycerol-phosphate dehydratase (195 aa).

This sequence belongs to the imidazoleglycerol-phosphate dehydratase family.

It is found in the cytoplasm. The catalysed reaction is D-erythro-1-(imidazol-4-yl)glycerol 3-phosphate = 3-(imidazol-4-yl)-2-oxopropyl phosphate + H2O. The protein operates within amino-acid biosynthesis; L-histidine biosynthesis; L-histidine from 5-phospho-alpha-D-ribose 1-diphosphate: step 6/9. This chain is Imidazoleglycerol-phosphate dehydratase, found in Acetivibrio thermocellus (strain ATCC 27405 / DSM 1237 / JCM 9322 / NBRC 103400 / NCIMB 10682 / NRRL B-4536 / VPI 7372) (Clostridium thermocellum).